Reading from the N-terminus, the 544-residue chain is Chaperonin GroEL 3 (544 aa).

ATP-binding positions include 30 to 33 (TLGP), Lys-51, 87 to 91 (DGTTT), Gly-415, and Asp-495.

It belongs to the chaperonin (HSP60) family. As to quaternary structure, forms a cylinder of 14 subunits composed of two heptameric rings stacked back-to-back. Interacts with the co-chaperonin GroES.

It is found in the cytoplasm. It carries out the reaction ATP + H2O + a folded polypeptide = ADP + phosphate + an unfolded polypeptide.. In terms of biological role, together with its co-chaperonin GroES, plays an essential role in assisting protein folding. The GroEL-GroES system forms a nano-cage that allows encapsulation of the non-native substrate proteins and provides a physical environment optimized to promote and accelerate protein folding. This is Chaperonin GroEL 3 from Psychromonas ingrahamii (strain DSM 17664 / CCUG 51855 / 37).